Consider the following 441-residue polypeptide: Ribosomal protein uS12 methylthiotransferase RimO (441 aa).

Residues 8 to 118 enclose the MTTase N-terminal domain; that stretch reads PKIGFVSLGC…VLQHVHHYVP (111 aa). The [4Fe-4S] cluster site is built by C17, C53, C82, C150, C154, and C157. Residues 136–373 enclose the Radical SAM core domain; the sequence is LTPRHYAYLK…MQLQQQISAE (238 aa). In terms of domain architecture, TRAM spans 376–441; it reads QEKVGREILV…DEYDLWGSRV (66 aa).

Belongs to the methylthiotransferase family. RimO subfamily. It depends on [4Fe-4S] cluster as a cofactor.

It localises to the cytoplasm. It catalyses the reaction L-aspartate(89)-[ribosomal protein uS12]-hydrogen + (sulfur carrier)-SH + AH2 + 2 S-adenosyl-L-methionine = 3-methylsulfanyl-L-aspartate(89)-[ribosomal protein uS12]-hydrogen + (sulfur carrier)-H + 5'-deoxyadenosine + L-methionine + A + S-adenosyl-L-homocysteine + 2 H(+). Catalyzes the methylthiolation of an aspartic acid residue of ribosomal protein uS12. The sequence is that of Ribosomal protein uS12 methylthiotransferase RimO from Salmonella agona (strain SL483).